The following is a 155-amino-acid chain: Endoribonuclease YbeY (155 aa).

3 residues coordinate Zn(2+): H120, H124, and H130.

It belongs to the endoribonuclease YbeY family. Zn(2+) serves as cofactor.

The protein resides in the cytoplasm. Its function is as follows. Single strand-specific metallo-endoribonuclease involved in late-stage 70S ribosome quality control and in maturation of the 3' terminus of the 16S rRNA. This chain is Endoribonuclease YbeY, found in Staphylococcus aureus (strain bovine RF122 / ET3-1).